A 585-amino-acid chain; its full sequence is Lipoprotein LpqB (585 aa).

The N-terminal stretch at 1–17 (MGRKLLGLLMLAVLLAG) is a signal peptide. A lipid anchor (N-palmitoyl cysteine) is attached at Cys18. A lipid anchor (S-diacylglycerol cysteine) is attached at Cys18. Disordered regions lie at residues 24–46 (SSAP…KPTP) and 560–585 (PSAD…VLPG).

This sequence belongs to the LpqB lipoprotein family.

The protein resides in the cell membrane. This Mycobacterium paratuberculosis protein is Lipoprotein LpqB.